The chain runs to 87 residues: Small ribosomal subunit protein uS17 (87 aa).

This sequence belongs to the universal ribosomal protein uS17 family. Part of the 30S ribosomal subunit.

In terms of biological role, one of the primary rRNA binding proteins, it binds specifically to the 5'-end of 16S ribosomal RNA. In Alkalilimnicola ehrlichii (strain ATCC BAA-1101 / DSM 17681 / MLHE-1), this protein is Small ribosomal subunit protein uS17.